The sequence spans 247 residues: Ribosomal RNA large subunit methyltransferase E (247 aa).

The interval 1 to 21 (MKKTTKKTAGGYGGSGSHKLY) is disordered. Residues Gly-88, Trp-90, Asp-111, Asp-127, and Asp-151 each coordinate S-adenosyl-L-methionine. Catalysis depends on Lys-191, which acts as the Proton acceptor.

It belongs to the class I-like SAM-binding methyltransferase superfamily. RNA methyltransferase RlmE family.

The protein resides in the cytoplasm. The catalysed reaction is uridine(2552) in 23S rRNA + S-adenosyl-L-methionine = 2'-O-methyluridine(2552) in 23S rRNA + S-adenosyl-L-homocysteine + H(+). Its function is as follows. Specifically methylates the uridine in position 2552 of 23S rRNA at the 2'-O position of the ribose in the fully assembled 50S ribosomal subunit. The protein is Ribosomal RNA large subunit methyltransferase E of Bartonella henselae (strain ATCC 49882 / DSM 28221 / CCUG 30454 / Houston 1) (Rochalimaea henselae).